A 1462-amino-acid chain; its full sequence is Glucosyltransferase-S (1462 aa).

The segment at serine 35–asparagine 164 is disordered. Polar residues predominate over residues valine 37–glutamine 52. Residues threonine 71–alanine 85 show a composition bias toward low complexity. Residues asparagine 86 to asparagine 108 show a composition bias toward polar residues. Positions serine 109 to glutamate 133 are enriched in basic and acidic residues. Residues glutamate 134 to alanine 149 are compositionally biased toward low complexity. A compositionally biased stretch (polar residues) spans glutamine 154–lysine 163. 14 Cell wall-binding repeats span residues isoleucine 171–proline 190, lysine 192–alanine 211, serine 1095–alanine 1115, lysine 1116–methionine 1136, valine 1137–glutamine 1156, serine 1180–methionine 1201, alanine 1202–glutamine 1221, lysine 1223–methionine 1244, valine 1246–alanine 1266, leucine 1267–glutamine 1286, arginine 1310–alanine 1330, valine 1331–glutamine 1350, lysine 1352–leucine 1372, and valine 1374–alanine 1394.

The protein belongs to the glycosyl hydrolase 70 family.

It localises to the secreted. It carries out the reaction [(1-&gt;6)-alpha-D-glucosyl](n) + sucrose = [(1-&gt;6)-alpha-D-glucosyl](n+1) + D-fructose. Production of extracellular glucans, that are thought to play a key role in the development of the dental plaque because of their ability to adhere to smooth surfaces and mediate the aggregation of bacterial cells and food debris. The chain is Glucosyltransferase-S (gtfD) from Streptococcus mutans serotype c (strain ATCC 700610 / UA159).